The chain runs to 56 residues: UPF0391 membrane protein HCH_04387 (56 aa).

Helical transmembrane passes span 6–26 and 30–50; these read IVFF…IAAA and IAQI…IAGG.

It belongs to the UPF0391 family.

It localises to the cell membrane. The chain is UPF0391 membrane protein HCH_04387 from Hahella chejuensis (strain KCTC 2396).